The chain runs to 252 residues: Imidazole glycerol phosphate synthase subunit HisF (252 aa).

Active-site residues include Asp-11 and Asp-130.

It belongs to the HisA/HisF family. As to quaternary structure, heterodimer of HisH and HisF.

It is found in the cytoplasm. The catalysed reaction is 5-[(5-phospho-1-deoxy-D-ribulos-1-ylimino)methylamino]-1-(5-phospho-beta-D-ribosyl)imidazole-4-carboxamide + L-glutamine = D-erythro-1-(imidazol-4-yl)glycerol 3-phosphate + 5-amino-1-(5-phospho-beta-D-ribosyl)imidazole-4-carboxamide + L-glutamate + H(+). Its pathway is amino-acid biosynthesis; L-histidine biosynthesis; L-histidine from 5-phospho-alpha-D-ribose 1-diphosphate: step 5/9. In terms of biological role, IGPS catalyzes the conversion of PRFAR and glutamine to IGP, AICAR and glutamate. The HisF subunit catalyzes the cyclization activity that produces IGP and AICAR from PRFAR using the ammonia provided by the HisH subunit. In Bacillus anthracis (strain CDC 684 / NRRL 3495), this protein is Imidazole glycerol phosphate synthase subunit HisF.